The chain runs to 377 residues: MNIFTTFLFMIVIGAVIGAATNHLAIKMLFRPYKPYYLFGKQLPFTPGLIPKRRDEVAKQVGVLVMEHLLTPEGIQKRFESSEAKQEILHTVHRLIDKGADMEITVLSLLERFGVSHADVKADEWLHHWSDRKLASLLKKYNEQTLSELLPLEVENKISSKIPDAADYILKRGIHYFESEEGKARLGNMIDDFLKERGMLGGMVQMFLGNSSLIDRVHPEIIKFLRNAETKKFLTDLLVQEWEKVKQFSLQELDDKWNVKELAYSVKKQLLSHFSTKVILDKPVGSYVSEVAVDLKIYLAPVLVDKGIKAASNALEGLLAKLKFEDIIREQIELFPLKKMEELVISISNNELKMITFLGGFLGGLIGAIQAIFVTLF.

A run of 2 helical transmembrane segments spans residues 1 to 21 (MNIFTTFLFMIVIGAVIGAAT) and 357 to 377 (FLGGFLGGLIGAIQAIFVTLF).

It belongs to the UPF0754 family.

It localises to the cell membrane. The protein is UPF0754 membrane protein BPUM_0927 of Bacillus pumilus (strain SAFR-032).